Reading from the N-terminus, the 459-residue chain is MDIDHGRESDGEMVGTIASCGLLLHSLLAGLGRRAAGFARKVGGAAREDPRRVAHSLKVGLALALVSVVYFVTPLFNGLGVSAIWAVLTVVVVMEYTVGATLSKGLNRALATLVAGCIAVGAHQLAELAERCGDQGEPIVLTVLVFFVASAATFLRFIPEIKAKYDYGVTIFILTFGLVAVSSYRVEELIQLAHQRFYTIAVGVFICLCTTVFLFPVWAGEDVHKLASGNLDKLAQFIEGMEFNCFGENSVANNFGGKDSPQMHKSVLNSKATEDSLCTFAKWEPRHGQFRFRHPWSQYQKLGTLCRQCASSMEALASYVITTSKTQCPAAANPELSCKVRKTCGEMSLHSSKVLRDLAMATRTMTVPSPVNITMATAVKAAESLRSELAENTALLQVMHVAVTATLLADLVDRVKEIAECVDVLARLAHFKNPEDTKNVVVSTVSRGIDEPLPDVVIL.

The Extracellular segment spans residues 1-52 (MDIDHGRESDGEMVGTIASCGLLLHSLLAGLGRRAAGFARKVGGAAREDPRR). The next 2 helical transmembrane spans lie at 53 to 73 (VAHS…YFVT) and 74 to 94 (PLFN…VVVM). Over 95-108 (EYTVGATLSKGLNR) the chain is Extracellular. A helical membrane pass occupies residues 109 to 129 (ALATLVAGCIAVGAHQLAELA). Residues 130 to 137 (ERCGDQGE) lie on the Cytoplasmic side of the membrane. A helical transmembrane segment spans residues 138-158 (PIVLTVLVFFVASAATFLRFI). The Extracellular segment spans residues 159-160 (PE). Residues 161-181 (IKAKYDYGVTIFILTFGLVAV) form a helical membrane-spanning segment. The Cytoplasmic portion of the chain corresponds to 182–199 (SSYRVEELIQLAHQRFYT). Residues 200–220 (IAVGVFICLCTTVFLFPVWAG) traverse the membrane as a helical segment. At 221-459 (EDVHKLASGN…DEPLPDVVIL (239 aa)) the chain is on the extracellular side.

Belongs to the aromatic acid exporter (TC 2.A.85) family. In terms of tissue distribution, detected in root tips.

The protein localises to the cell membrane. Its activity is regulated as follows. Activated by external aluminum. The enhancement of malate transport is not due to alteration in the selectivity properties but is due to an increased anion permeability. In terms of biological role, malate transporter critical for aluminum tolerance. Permeable to chloride, nitrate, sulfate and malate. In Triticum aestivum (Wheat), this protein is Aluminum-activated malate transporter 1 (ALMT1).